A 570-amino-acid chain; its full sequence is Proline--tRNA ligase (570 aa).

Belongs to the class-II aminoacyl-tRNA synthetase family. ProS type 1 subfamily. As to quaternary structure, homodimer.

The protein localises to the cytoplasm. The enzyme catalyses tRNA(Pro) + L-proline + ATP = L-prolyl-tRNA(Pro) + AMP + diphosphate. Its function is as follows. Catalyzes the attachment of proline to tRNA(Pro) in a two-step reaction: proline is first activated by ATP to form Pro-AMP and then transferred to the acceptor end of tRNA(Pro). As ProRS can inadvertently accommodate and process non-cognate amino acids such as alanine and cysteine, to avoid such errors it has two additional distinct editing activities against alanine. One activity is designated as 'pretransfer' editing and involves the tRNA(Pro)-independent hydrolysis of activated Ala-AMP. The other activity is designated 'posttransfer' editing and involves deacylation of mischarged Ala-tRNA(Pro). The misacylated Cys-tRNA(Pro) is not edited by ProRS. The chain is Proline--tRNA ligase from Desulfotalea psychrophila (strain LSv54 / DSM 12343).